A 293-amino-acid chain; its full sequence is Bifunctional protein FolD (293 aa).

Residues 164-166 (GRS), Ser193, and Thr234 contribute to the NADP(+) site.

It belongs to the tetrahydrofolate dehydrogenase/cyclohydrolase family. Homodimer.

The catalysed reaction is (6R)-5,10-methylene-5,6,7,8-tetrahydrofolate + NADP(+) = (6R)-5,10-methenyltetrahydrofolate + NADPH. It catalyses the reaction (6R)-5,10-methenyltetrahydrofolate + H2O = (6R)-10-formyltetrahydrofolate + H(+). Its pathway is one-carbon metabolism; tetrahydrofolate interconversion. Functionally, catalyzes the oxidation of 5,10-methylenetetrahydrofolate to 5,10-methenyltetrahydrofolate and then the hydrolysis of 5,10-methenyltetrahydrofolate to 10-formyltetrahydrofolate. This Bacteroides thetaiotaomicron (strain ATCC 29148 / DSM 2079 / JCM 5827 / CCUG 10774 / NCTC 10582 / VPI-5482 / E50) protein is Bifunctional protein FolD.